A 401-amino-acid chain; its full sequence is tRNA(Met) cytidine acetate ligase (401 aa).

ATP contacts are provided by residues 7–20 (IVEYNPLHNGHLYH), G102, N164, and R189.

It belongs to the TmcAL family.

The protein resides in the cytoplasm. It catalyses the reaction cytidine(34) in elongator tRNA(Met) + acetate + ATP = N(4)-acetylcytidine(34) in elongator tRNA(Met) + AMP + diphosphate. In terms of biological role, catalyzes the formation of N(4)-acetylcytidine (ac(4)C) at the wobble position of elongator tRNA(Met), using acetate and ATP as substrates. First activates an acetate ion to form acetyladenylate (Ac-AMP) and then transfers the acetyl group to tRNA to form ac(4)C34. The polypeptide is tRNA(Met) cytidine acetate ligase (Caldanaerobacter subterraneus subsp. tengcongensis (strain DSM 15242 / JCM 11007 / NBRC 100824 / MB4) (Thermoanaerobacter tengcongensis)).